A 344-amino-acid chain; its full sequence is Arginine N-succinyltransferase (344 aa).

A succinyl-CoA-binding site is contributed by Leu-125. The Proton donor role is filled by His-229.

This sequence belongs to the arginine N-succinyltransferase family.

It catalyses the reaction succinyl-CoA + L-arginine = N(2)-succinyl-L-arginine + CoA + H(+). Its pathway is amino-acid degradation; L-arginine degradation via AST pathway; L-glutamate and succinate from L-arginine: step 1/5. Catalyzes the transfer of succinyl-CoA to arginine to produce N(2)-succinylarginine. The chain is Arginine N-succinyltransferase from Escherichia coli (strain 55989 / EAEC).